Here is a 485-residue protein sequence, read N- to C-terminus: Tektin-5 (485 aa).

Coiled coils occupy residues 114–185 (RLTD…EVNC), 225–247 (QEQMRKLAQRIDIQMRDNRDAQH), 307–385 (QNMR…MAKE), and 421–444 (TIDDTLQTLKLRLRETQDTLQLLV).

It belongs to the tektin family. As to quaternary structure, microtubule inner protein component of sperm flagellar doublet microtubules. Interacts with TEKT3. Post-translationally, ubiquitinated, leading to its degradation. Deubiquitinated by USP16, promoting its stability.

It localises to the cytoplasm. It is found in the cytoskeleton. Its subcellular location is the flagellum axoneme. Its function is as follows. Sperm-specific microtubule inner protein (MIP) part of the dynein-decorated doublet microtubules (DMTs) in flagellar axoneme. Forms an extensive interaction network in different conformations that reinforces the helix bundle composed by other tektin proteins (TEKT1 to TEKT4) and MIPs to anchor the tektin bundle onto the tubulin wall of A-tubule of the sperm flagellum. This Homo sapiens (Human) protein is Tektin-5 (TEKT5).